The following is a 117-amino-acid chain: Large ribosomal subunit protein bL20 (117 aa).

Belongs to the bacterial ribosomal protein bL20 family.

Its function is as follows. Binds directly to 23S ribosomal RNA and is necessary for the in vitro assembly process of the 50S ribosomal subunit. It is not involved in the protein synthesizing functions of that subunit. This Mannheimia succiniciproducens (strain KCTC 0769BP / MBEL55E) protein is Large ribosomal subunit protein bL20.